We begin with the raw amino-acid sequence, 280 residues long: Dexamethasone-induced Ras-related protein 1 (280 aa).

An S-nitrosocysteine modification is found at cysteine 11. Residue 31–38 (GSSKVGKT) coordinates GTP. The short motif at 53-61 (YTPTIEDFH) is the Effector region element. Residues 78-82 (DTSGN) and 145-148 (NKGD) each bind GTP. Cysteine 277 is modified (cysteine methyl ester). Cysteine 277 carries S-farnesyl cysteine lipidation. Positions 278-280 (VIS) are cleaved as a propeptide — removed in mature form.

It belongs to the small GTPase superfamily. RasD family. Component of a complex, at least composed of APBB1, RASD1/DEXRAS1 and APP. Interacts with APBB1/FE65. Forms a ternary complex with CAPON and NOS1. Post-translationally, S-nitrosylation stimulates guanine-nucleotide exchange activity. In terms of tissue distribution, expressed in brain, heart, kidney and liver.

Its subcellular location is the cell membrane. The protein resides in the cytoplasm. It localises to the perinuclear region. The protein localises to the nucleus. Its function is as follows. Small GTPase. Negatively regulates the transcription regulation activity of the APBB1/FE65-APP complex via its interaction with APBB1/FE65. The protein is Dexamethasone-induced Ras-related protein 1 (Rasd1) of Mus musculus (Mouse).